A 256-amino-acid chain; its full sequence is 5-oxoprolinase subunit A (256 aa).

The protein belongs to the LamB/PxpA family. Forms a complex composed of PxpA, PxpB and PxpC.

The enzyme catalyses 5-oxo-L-proline + ATP + 2 H2O = L-glutamate + ADP + phosphate + H(+). Its function is as follows. Catalyzes the cleavage of 5-oxoproline to form L-glutamate coupled to the hydrolysis of ATP to ADP and inorganic phosphate. The sequence is that of 5-oxoprolinase subunit A from Geobacillus kaustophilus (strain HTA426).